We begin with the raw amino-acid sequence, 194 residues long: Surfactant protein C (194 aa).

The tract at residues 1–21 (MDMGSKEVLMESPPDYSTGPR) is disordered. A propeptide spanning residues 1–23 (MDMGSKEVLMESPPDYSTGPRSQ) is cleaved from the precursor. 2 S-palmitoyl cysteine lipidation sites follow: Cys-28 and Cys-29. The propeptide occupies 59 to 194 (HMSQKHTEMV…LCGELPLYYI (136 aa)). The BRICHOS domain maps to 95 to 194 (FSIGSTGIVL…LCGELPLYYI (100 aa)). A disulfide bond links Cys-122 and Cys-186. A disordered region spans residues 149-170 (SSTPTSKLGQEEGHSAGSDSDS).

It localises to the secreted. The protein resides in the extracellular space. The protein localises to the surface film. Pulmonary surfactant associated proteins promote alveolar stability by lowering the surface tension at the air-liquid interface in the peripheral air spaces. The polypeptide is Surfactant protein C (Rattus norvegicus (Rat)).